The primary structure comprises 203 residues: Recombination protein RecR (203 aa).

The C4-type zinc finger occupies 58-73 (CDYCGNLDIVSICNIC). One can recognise a Toprim domain in the interval 81 to 177 (STIAVVESVA…KISKLASGIP (97 aa)).

It belongs to the RecR family.

May play a role in DNA repair. It seems to be involved in an RecBC-independent recombinational process of DNA repair. It may act with RecF and RecO. The chain is Recombination protein RecR from Orientia tsutsugamushi (strain Ikeda) (Rickettsia tsutsugamushi).